The chain runs to 57 residues: UPF0391 membrane protein RPD_3366 (57 aa).

The next 2 helical transmembrane spans lie at 4–24 and 30–50; these read WVVT…GGIA and IAKV…VVGL.

This sequence belongs to the UPF0391 family.

It localises to the cell membrane. This Rhodopseudomonas palustris (strain BisB5) protein is UPF0391 membrane protein RPD_3366.